The sequence spans 959 residues: ATP-dependent 6-phosphofructokinase subunit beta (959 aa).

Residues 2 to 573 are N-terminal catalytic PFK domain 1; the sequence is TVTTPFVNGT…HLNNFMAINS (572 aa). Residues 144–167 are disordered; the sequence is KNAVSTKPTPPPAPEASAESGLSS. A Phosphothreonine modification is found at Thr-152. A compositionally biased stretch (low complexity) spans 158 to 167; the sequence is EASAESGLSS. Phosphoserine is present on residues Ser-163 and Ser-171. ATP is bound by residues Gly-206, 270–271, and 300–303; these read RC and GDGS. Asp-301 provides a ligand contact to Mg(2+). Beta-D-fructose 6-phosphate-binding positions include 346 to 348, Arg-383, 390 to 392, Glu-447, Arg-475, and 481 to 484; these read SID, MGR, and HVQR. Asp-348 serves as the catalytic Proton acceptor. The interdomain linker stretch occupies residues 574–587; sequence ADHNEPKLPKDKRL. Residues 588–959 form a C-terminal regulatory PFK domain 2 region; the sequence is KIAIVNVGAP…DHLVGRKRVD (372 aa). Beta-D-fructose 2,6-bisphosphate contacts are provided by residues Arg-658, 716–720, Arg-754, and 761–763; these read TLSNN and QGG. A Phosphoserine modification is found at Ser-803. Beta-D-fructose 2,6-bisphosphate is bound by residues Lys-847, 853-856, and Arg-935; that span reads HVQQ.

The protein belongs to the phosphofructokinase type A (PFKA) family. ATP-dependent PFK group I subfamily. Eukaryotic two domain clade 'E' sub-subfamily. As to quaternary structure, heterooctamer of 4 alpha and 4 beta chains. Mg(2+) serves as cofactor.

The protein localises to the cytoplasm. It localises to the mitochondrion outer membrane. The enzyme catalyses beta-D-fructose 6-phosphate + ATP = beta-D-fructose 1,6-bisphosphate + ADP + H(+). It functions in the pathway carbohydrate degradation; glycolysis; D-glyceraldehyde 3-phosphate and glycerone phosphate from D-glucose: step 3/4. With respect to regulation, allosterically activated by ADP, AMP, or fructose 2,6-bisphosphate, and allosterically inhibited by ATP or citrate. In terms of biological role, catalyzes the phosphorylation of D-fructose 6-phosphate to fructose 1,6-bisphosphate by ATP, the first committing step of glycolysis. The protein is ATP-dependent 6-phosphofructokinase subunit beta (PFK2) of Saccharomyces cerevisiae (strain ATCC 204508 / S288c) (Baker's yeast).